The following is a 455-amino-acid chain: GTPase Der (455 aa).

2 consecutive EngA-type G domains span residues 4–169 (PVVA…PPKD) and 178–353 (IQMA…EQHR). GTP contacts are provided by residues 10–17 (GRPNVGKS), 57–61 (DTGGL), 120–123 (NKCE), 184–191 (GRPNVGKS), 231–235 (DTAGI), and 296–299 (NKWD). The region spanning 354–439 (RRVSTSVVNE…PLRLFWRGKQ (86 aa)) is the KH-like domain.

The protein belongs to the TRAFAC class TrmE-Era-EngA-EngB-Septin-like GTPase superfamily. EngA (Der) GTPase family. As to quaternary structure, associates with the 50S ribosomal subunit.

Functionally, GTPase that plays an essential role in the late steps of ribosome biogenesis. In Synechococcus sp. (strain CC9605), this protein is GTPase Der.